We begin with the raw amino-acid sequence, 133 residues long: uncharacterized protein (133 aa).

The interval 44–79 is disordered; that stretch reads VENQLASSKTEEQTLKISKKSNLNPAQKSSTFGLEN. Residues 63–79 show a composition bias toward polar residues; it reads KSNLNPAQKSSTFGLEN.

The protein localises to the plastid. The protein resides in the chloroplast. This is an uncharacterized protein from Chlorella vulgaris (Green alga).